Reading from the N-terminus, the 172-residue chain is Translation initiation factor IF-3 (172 aa).

The protein belongs to the IF-3 family. In terms of assembly, monomer.

It is found in the cytoplasm. Its function is as follows. IF-3 binds to the 30S ribosomal subunit and shifts the equilibrium between 70S ribosomes and their 50S and 30S subunits in favor of the free subunits, thus enhancing the availability of 30S subunits on which protein synthesis initiation begins. This chain is Translation initiation factor IF-3, found in Bartonella tribocorum (strain CIP 105476 / IBS 506).